The primary structure comprises 358 residues: Probable branched-chain-amino-acid aminotransferase (358 aa).

N6-(pyridoxal phosphate)lysine is present on Lys196.

Belongs to the class-IV pyridoxal-phosphate-dependent aminotransferase family. The cofactor is pyridoxal 5'-phosphate.

It carries out the reaction L-leucine + 2-oxoglutarate = 4-methyl-2-oxopentanoate + L-glutamate. The catalysed reaction is L-isoleucine + 2-oxoglutarate = (S)-3-methyl-2-oxopentanoate + L-glutamate. The enzyme catalyses L-valine + 2-oxoglutarate = 3-methyl-2-oxobutanoate + L-glutamate. It participates in amino-acid biosynthesis; L-isoleucine biosynthesis; L-isoleucine from 2-oxobutanoate: step 4/4. It functions in the pathway amino-acid biosynthesis; L-leucine biosynthesis; L-leucine from 3-methyl-2-oxobutanoate: step 4/4. Its pathway is amino-acid biosynthesis; L-valine biosynthesis; L-valine from pyruvate: step 4/4. Functionally, acts on leucine, isoleucine and valine. This chain is Probable branched-chain-amino-acid aminotransferase (ilvE), found in Staphylococcus aureus (strain MRSA252).